A 68-amino-acid chain; its full sequence is MDQFQALIEPARQFSKDSYRLVKRCTKPDRKEYQKIAMATAIGFAIMGFIGFFVKLIHIPINNIIVGA.

Residues 1–32 are Cytoplasmic-facing; the sequence is MDQFQALIEPARQFSKDSYRLVKRCTKPDRKE. Residues 33–61 traverse the membrane as a helical segment; that stretch reads YQKIAMATAIGFAIMGFIGFFVKLIHIPI. Topologically, residues 62-68 are extracellular; the sequence is NNIIVGA.

This sequence belongs to the SecE/SEC61-gamma family. Heterotrimeric complex composed of SEC61-alpha, SEC61-beta and SEC61-gamma. Expressed in the germline. Expression in the germline is regulated in a sex- and meiotic cycle stage-specific manner. Expressed in somatic tissues including the intestine and somatic gonad. Expressed in the intestine more highly in hermaprodites than in males. In hermaphrodites, weakly expressed in the spermatheca.

It localises to the endoplasmic reticulum membrane. Required for oocyte development and ovulation. Required for the translocation of secretory and transmembrane proteins into the endoplasmic reticulum in vitro. The polypeptide is Protein transport protein Sec61 subunit gamma (Caenorhabditis elegans).